The sequence spans 749 residues: 5-methyltetrahydropteroyltriglutamate--homocysteine methyltransferase (749 aa).

Residues 18–21 (REWK) and Lys-112 contribute to the 5-methyltetrahydropteroyltri-L-glutamate site. Residues 420 to 422 (IGS) and Glu-473 each bind L-homocysteine. Residues 420–422 (IGS) and Glu-473 contribute to the L-methionine site. Trp-550 contacts 5-methyltetrahydropteroyltri-L-glutamate. Position 588 (Asp-588) interacts with L-homocysteine. Asp-588 provides a ligand contact to L-methionine. 5-methyltetrahydropteroyltri-L-glutamate is bound at residue Glu-594. Residues His-630, Cys-632, and Glu-654 each coordinate Zn(2+). His-683 functions as the Proton donor in the catalytic mechanism. Cys-715 provides a ligand contact to Zn(2+).

It belongs to the vitamin-B12 independent methionine synthase family. It depends on Zn(2+) as a cofactor.

It carries out the reaction 5-methyltetrahydropteroyltri-L-glutamate + L-homocysteine = tetrahydropteroyltri-L-glutamate + L-methionine. It functions in the pathway amino-acid biosynthesis; L-methionine biosynthesis via de novo pathway; L-methionine from L-homocysteine (MetE route): step 1/1. Functionally, catalyzes the transfer of a methyl group from 5-methyltetrahydrofolate to homocysteine resulting in methionine formation. The sequence is that of 5-methyltetrahydropteroyltriglutamate--homocysteine methyltransferase from Staphylococcus haemolyticus (strain JCSC1435).